The primary structure comprises 86 residues: Kappa-theraphotoxin-Cg1a 4 (86 aa).

An N-terminal signal peptide occupies residues Met-1–Ala-21. Positions Ala-22–Arg-50 are excised as a propeptide. Disulfide bonds link Cys-52-Cys-66, Cys-59-Cys-71, and Cys-65-Cys-78. Phe-84 carries the phenylalanine amide modification.

It belongs to the neurotoxin 10 (Hwtx-1) family. 28 (Jztx-11) subfamily. As to expression, expressed by the venom gland.

It localises to the secreted. In terms of biological role, this toxin acts as a voltage-dependent gating-modifier. It inhibits the sodium conductance (IC(50)=124 nM) and slows the fast inactivation (EC(50)=1180 nM) of Nav1.5/SCN5A. It significantly shifts the activation to more depolarized voltages and decreases the deactivation of Nav1.5 currents upon extreme depolarization, but only slightly affects voltage-dependence of steady-state inactivation. In addition, this toxin causes an approximately five-fold decrease in the rate of recovery from inactivation and an approximately 1.9-fold reduction in the closed-state inactivation rate. This toxin integrates the functions of site 3 toxins (alpha-scorpion toxins) with site 4 toxins (beta-scorpion and spider toxins) by targeting multiple sites on Nav1.5. Also shows inhibition of voltage-gated potassium channels (5 uM completely inhibits Kv2.1/KCNB1, whereas 5 uM moderately inhibits Kv4.2/KCND2 Kv4.1/KCND1 channels). The sequence is that of Kappa-theraphotoxin-Cg1a 4 from Chilobrachys guangxiensis (Chinese earth tiger tarantula).